A 237-amino-acid polypeptide reads, in one-letter code: UPF0688 protein C1orf174 homolog (237 aa).

A disordered region spans residues 1-187; that stretch reads MRSRKLAGGV…LLDDDSNQPM (187 aa). Residues 11 to 28 are compositionally biased toward low complexity; that stretch reads RSSARLRARSCSAASASA. Polar residues predominate over residues 29–47; sequence QDTHVTTSAQTACQTPSSH. Over residues 48–76 the composition is skewed to basic and acidic residues; that stretch reads KATDRRTSKKFKYDKGHIVKSELQKHRSD. Position 183 is a phosphoserine (S183).

Belongs to the UPF0688 family.

It is found in the nucleus. The sequence is that of UPF0688 protein C1orf174 homolog from Bos taurus (Bovine).